We begin with the raw amino-acid sequence, 160 residues long: Putative lipoprotein YfiB (160 aa).

Residues 1-18 (MIKHLVAPLVFTSLILTG) form the signal peptide. A lipid anchor (N-palmitoyl cysteine) is attached at Cys-19. A lipid anchor (S-diacylglycerol cysteine) is attached at Cys-19. Residues 43–160 (AGDWSLGLSD…RRVAVVITTP (118 aa)) form the OmpA-like domain.

Belongs to the outer membrane OOP (TC 1.B.6) superfamily.

The protein resides in the cell membrane. This is Putative lipoprotein YfiB (yfiB) from Escherichia coli (strain K12).